The primary structure comprises 601 residues: MSSLPNASQLDKSGRRIVVDPVTRIEGHMRCEVNVDANNIITNAVSTGTMWRGLEVILKGRDPRDAWAFVERICGVCTGTTRWTSVRAVEDALGIQIPYNAHLIRNLMDKQLQVQDHIVPFYHLLRLDWVNPVNALKADPKATSALPAALAAHAKSSPGYFRHVQTRLKKFVESGATACSPNGYWDNPAYQAPARPDLMAVAHYLEALDVQKDIVEIHTIFGGKNPHPNYMVGGVACAINLDDVGAAGGRSTCTSLNFVLERIHEAREFTRNVYLPDVLAVAGIYKDWLYGGGLPGHNLLSYGTFTKVPGDKSSDLLPAGAIVGGNWDEVLPVDVRVPEEIQEFVSHSWYRYADETKGLHPWDGVTEPKFELGPNTKGTRTNIKELDEAHKYSWIKARAWRGHAMEVGPLARYIIAYRSGREYVKEQVDRSLAAFNQSTGLNLGLKQFLPSTLGRTLARALECELAVDSMLDDWQALVGNIKAGDRATANVEKWDPSTWPKEAKGVGINEAPRGALGHWIRLKDGKIENYQAIVPTTWNGTPRDHLGNIGAYEAALLNTRMERPDEPVEILRTLHSFDPCLACSTHVMSPDGQELTRVKVR.

Residues cysteine 74, cysteine 77, cysteine 580, and cysteine 583 each coordinate Ni(2+).

It belongs to the [NiFe]/[NiFeSe] hydrogenase large subunit family. In terms of assembly, heterodimer of a large and a small subunit. Ni(2+) serves as cofactor.

The protein resides in the cell membrane. It catalyses the reaction H2 + A = AH2. In terms of biological role, this enzyme recycles the H(2) produced by nitrogenase to increase the production of ATP and to protect nitrogenase against inhibition or damage by O(2) under carbon- or phosphate-limited conditions. The polypeptide is Uptake hydrogenase large subunit (hupL) (Azotobacter chroococcum mcd 1).